The sequence spans 164 residues: Ecotin (164 aa).

Positions 1–20 are cleaved as a signal peptide; sequence MKMFVPAVVFAALASASAWA. The cysteines at positions 72 and 109 are disulfide-linked.

This sequence belongs to the protease inhibitor I11 (ecotin) family. In terms of assembly, homodimer.

The protein localises to the periplasm. General inhibitor of pancreatic serine proteases: inhibits chymotrypsin, trypsin, elastases, factor X, kallikrein as well as a variety of other proteases. The polypeptide is Ecotin (Salmonella paratyphi A (strain ATCC 9150 / SARB42)).